We begin with the raw amino-acid sequence, 365 residues long: Flagellar P-ring protein 2 (365 aa).

Positions M1–S19 are cleaved as a signal peptide.

Belongs to the FlgI family. In terms of assembly, the basal body constitutes a major portion of the flagellar organelle and consists of four rings (L,P,S, and M) mounted on a central rod.

Its subcellular location is the periplasm. It localises to the bacterial flagellum basal body. Functionally, assembles around the rod to form the L-ring and probably protects the motor/basal body from shearing forces during rotation. The polypeptide is Flagellar P-ring protein 2 (Chromobacterium violaceum (strain ATCC 12472 / DSM 30191 / JCM 1249 / CCUG 213 / NBRC 12614 / NCIMB 9131 / NCTC 9757 / MK)).